Consider the following 581-residue polypeptide: Arginine--tRNA ligase (581 aa).

The 'HIGH' region signature appears at 126-136; sequence PNLAKEMHVGH.

Belongs to the class-I aminoacyl-tRNA synthetase family. In terms of assembly, monomer.

The protein resides in the cytoplasm. The enzyme catalyses tRNA(Arg) + L-arginine + ATP = L-arginyl-tRNA(Arg) + AMP + diphosphate. The chain is Arginine--tRNA ligase from Shewanella loihica (strain ATCC BAA-1088 / PV-4).